The sequence spans 216 residues: Deoxyribose-phosphate aldolase (216 aa).

Catalysis depends on Asp89, which acts as the Proton donor/acceptor. Residue Lys152 is the Schiff-base intermediate with acetaldehyde of the active site. Lys181 acts as the Proton donor/acceptor in catalysis.

It belongs to the DeoC/FbaB aldolase family. DeoC type 1 subfamily.

It is found in the cytoplasm. The enzyme catalyses 2-deoxy-D-ribose 5-phosphate = D-glyceraldehyde 3-phosphate + acetaldehyde. The protein operates within carbohydrate degradation; 2-deoxy-D-ribose 1-phosphate degradation; D-glyceraldehyde 3-phosphate and acetaldehyde from 2-deoxy-alpha-D-ribose 1-phosphate: step 2/2. In terms of biological role, catalyzes a reversible aldol reaction between acetaldehyde and D-glyceraldehyde 3-phosphate to generate 2-deoxy-D-ribose 5-phosphate. This is Deoxyribose-phosphate aldolase from Clostridium tetani (strain Massachusetts / E88).